The sequence spans 321 residues: MTKPITVQPGVQLRDADKMALIPVKFLPEQEGEQLKKPDWMRIRLPKTDEKIQNVKNIMRKNNLHSVCEEASCPNLSECFNHGTATFMILGAICTRHCPFCDVAHGKPLAPDADEPKKLANTIREMALKYVVITSVDRDDLRDGGAQHFADCIREIRLASPNTRIETLTPDFRGRMDKALDVFRETPPDVFNHNLETAPRLYSMARPGADYAWSLKLLQKMKELHPDLPTKSGLMMGLGETNDEIVQVLKDLRAHGVTMLTLGQYLQPSRHHLPVKRYVPPQEFDELKAIALDLGFTHAACGPFVRSSYHADLQAQGQEVK.

Positions 68, 73, 79, 94, 98, 101, and 308 each coordinate [4Fe-4S] cluster. Positions 80–297 constitute a Radical SAM core domain; it reads FNHGTATFMI…KAIALDLGFT (218 aa).

It belongs to the radical SAM superfamily. Lipoyl synthase family. [4Fe-4S] cluster is required as a cofactor.

The protein resides in the cytoplasm. It catalyses the reaction [[Fe-S] cluster scaffold protein carrying a second [4Fe-4S](2+) cluster] + N(6)-octanoyl-L-lysyl-[protein] + 2 oxidized [2Fe-2S]-[ferredoxin] + 2 S-adenosyl-L-methionine + 4 H(+) = [[Fe-S] cluster scaffold protein] + N(6)-[(R)-dihydrolipoyl]-L-lysyl-[protein] + 4 Fe(3+) + 2 hydrogen sulfide + 2 5'-deoxyadenosine + 2 L-methionine + 2 reduced [2Fe-2S]-[ferredoxin]. It functions in the pathway protein modification; protein lipoylation via endogenous pathway; protein N(6)-(lipoyl)lysine from octanoyl-[acyl-carrier-protein]: step 2/2. Functionally, catalyzes the radical-mediated insertion of two sulfur atoms into the C-6 and C-8 positions of the octanoyl moiety bound to the lipoyl domains of lipoate-dependent enzymes, thereby converting the octanoylated domains into lipoylated derivatives. The sequence is that of Lipoyl synthase from Tolumonas auensis (strain DSM 9187 / NBRC 110442 / TA 4).